The chain runs to 238 residues: Probable transcriptional regulatory protein YeeN (238 aa).

The protein belongs to the TACO1 family. YeeN subfamily.

It is found in the cytoplasm. The polypeptide is Probable transcriptional regulatory protein YeeN (Shigella sonnei (strain Ss046)).